The following is a 618-amino-acid chain: Pyocin-S1 (618 aa).

Belongs to the colicin/pyosin nuclease family. As to quaternary structure, purified pyocin S1 makes up a complex of the two (large and small) proteins. The large protein, but not the pyocin complex, shows in vitro DNase activity.

Its function is as follows. Causes breakdown of chromosomal DNA as well as complete inhibition of lipid synthesis in sensitive cells. The polypeptide is Pyocin-S1 (pys1) (Pseudomonas aeruginosa).